A 366-amino-acid polypeptide reads, in one-letter code: Probable cinnamyl alcohol dehydrogenase 3 (366 aa).

Zn(2+) is bound at residue Cys53. An NADP(+)-binding site is contributed by Ser55. 7 residues coordinate Zn(2+): His75, Glu76, Cys106, Cys109, Cys112, Cys120, and Cys169. NADP(+)-binding positions include Thr173, 194 to 199 (GLGGLG), 217 to 222 (SSSPGK), Thr257, Gly281, and 304 to 306 (SNI).

This sequence belongs to the zinc-containing alcohol dehydrogenase family. Homodimer. Zn(2+) is required as a cofactor.

The catalysed reaction is (E)-cinnamyl alcohol + NADP(+) = (E)-cinnamaldehyde + NADPH + H(+). The enzyme catalyses (E)-coniferol + NADP(+) = (E)-coniferaldehyde + NADPH + H(+). It catalyses the reaction (E)-sinapyl alcohol + NADP(+) = (E)-sinapaldehyde + NADPH + H(+). It carries out the reaction (E)-4-coumaroyl alcohol + NADP(+) = (E)-4-coumaraldehyde + NADPH + H(+). The catalysed reaction is (E)-caffeyl alcohol + NADP(+) = (E)-caffeyl aldehyde + NADPH + H(+). The protein operates within aromatic compound metabolism; phenylpropanoid biosynthesis. Involved in lignin biosynthesis. Catalyzes the final step specific for the production of lignin monomers. Catalyzes the NADPH-dependent reduction of coniferaldehyde, 5-hydroxyconiferaldehyde, sinapaldehyde, 4-coumaraldehyde and caffeyl aldehyde to their respective alcohols. This Oryza sativa subsp. japonica (Rice) protein is Probable cinnamyl alcohol dehydrogenase 3.